The sequence spans 547 residues: Putative cysteine ligase BshC (547 aa).

The stretch at 461 to 504 (ASTEATRSAIMDEMEALKQKVVRAEKRQQDEVRAQLKKAHTNLR) forms a coiled coil.

Belongs to the BshC family.

The polypeptide is Putative cysteine ligase BshC (Salinibacter ruber (strain DSM 13855 / M31)).